Consider the following 275-residue polypeptide: Glutamate racemase (275 aa).

Residues D22–S23 and Y54–G55 each bind substrate. Catalysis depends on C85, which acts as the Proton donor/acceptor. N86 to T87 lines the substrate pocket. The active-site Proton donor/acceptor is C196. Residue T197 to H198 coordinates substrate.

Belongs to the aspartate/glutamate racemases family.

The enzyme catalyses L-glutamate = D-glutamate. It participates in cell wall biogenesis; peptidoglycan biosynthesis. Functionally, provides the (R)-glutamate required for cell wall biosynthesis. This is Glutamate racemase from Pseudomonas syringae pv. tomato (strain ATCC BAA-871 / DC3000).